A 253-amino-acid polypeptide reads, in one-letter code: DNA repair protein RecO (253 aa).

Belongs to the RecO family.

In terms of biological role, involved in DNA repair and RecF pathway recombination. The polypeptide is DNA repair protein RecO (Pediococcus pentosaceus (strain ATCC 25745 / CCUG 21536 / LMG 10740 / 183-1w)).